A 379-amino-acid chain; its full sequence is Anhydro-N-acetylmuramic acid kinase (379 aa).

9–16 (GTSADGVD) serves as a coordination point for ATP.

This sequence belongs to the anhydro-N-acetylmuramic acid kinase family.

It catalyses the reaction 1,6-anhydro-N-acetyl-beta-muramate + ATP + H2O = N-acetyl-D-muramate 6-phosphate + ADP + H(+). It functions in the pathway amino-sugar metabolism; 1,6-anhydro-N-acetylmuramate degradation. Its pathway is cell wall biogenesis; peptidoglycan recycling. In terms of biological role, catalyzes the specific phosphorylation of 1,6-anhydro-N-acetylmuramic acid (anhMurNAc) with the simultaneous cleavage of the 1,6-anhydro ring, generating MurNAc-6-P. Is required for the utilization of anhMurNAc either imported from the medium or derived from its own cell wall murein, and thus plays a role in cell wall recycling. The protein is Anhydro-N-acetylmuramic acid kinase of Prochlorococcus marinus (strain MIT 9303).